A 300-amino-acid polypeptide reads, in one-letter code: Ribosomal RNA small subunit methyltransferase H (300 aa).

S-adenosyl-L-methionine-binding positions include 33-35 (GGH), D52, F79, D100, and Q107.

The protein belongs to the methyltransferase superfamily. RsmH family.

It localises to the cytoplasm. The catalysed reaction is cytidine(1402) in 16S rRNA + S-adenosyl-L-methionine = N(4)-methylcytidine(1402) in 16S rRNA + S-adenosyl-L-homocysteine + H(+). Functionally, specifically methylates the N4 position of cytidine in position 1402 (C1402) of 16S rRNA. This Mycoplasmopsis agalactiae (strain NCTC 10123 / CIP 59.7 / PG2) (Mycoplasma agalactiae) protein is Ribosomal RNA small subunit methyltransferase H.